A 104-amino-acid chain; its full sequence is Integration host factor subunit beta (104 aa).

Belongs to the bacterial histone-like protein family. Heterodimer of an alpha and a beta chain.

Its function is as follows. This protein is one of the two subunits of integration host factor, a specific DNA-binding protein that functions in genetic recombination as well as in transcriptional and translational control. The chain is Integration host factor subunit beta (ihfB) from Xylella fastidiosa (strain 9a5c).